The sequence spans 360 residues: Lipid-A-disaccharide synthase (360 aa).

This sequence belongs to the LpxB family.

The enzyme catalyses a lipid X + a UDP-2-N,3-O-bis[(3R)-3-hydroxyacyl]-alpha-D-glucosamine = a lipid A disaccharide + UDP + H(+). The protein operates within bacterial outer membrane biogenesis; LPS lipid A biosynthesis. Functionally, condensation of UDP-2,3-diacylglucosamine and 2,3-diacylglucosamine-1-phosphate to form lipid A disaccharide, a precursor of lipid A, a phosphorylated glycolipid that anchors the lipopolysaccharide to the outer membrane of the cell. This Helicobacter pylori (strain HPAG1) protein is Lipid-A-disaccharide synthase.